We begin with the raw amino-acid sequence, 1782 residues long: Vitellogenin receptor (1782 aa).

The signal sequence occupies residues 1 to 18; that stretch reads MRFIVLLFICSFIYPCYV. Residues 19 to 1663 lie on the Extracellular side of the membrane; it reads SSIGFRRISK…SINFSRNTRN (1645 aa). LDL-receptor class A domains are found at residues 35–72, 81–118, and 122–157; these read KCEDGYFQCNSGECIPVDKKCDYIDHCIDGSDEDFECD, TCAKDQFKCKNQECIPAAKYCDMVNDCLDESDEHDGCV, and NCTNKFLCTDGHCINKEWVCDGRNDCPDGNDEWNCK. Intrachain disulfides connect cysteine 36-cysteine 48, cysteine 43-cysteine 61, cysteine 55-cysteine 71, cysteine 82-cysteine 94, cysteine 89-cysteine 107, and cysteine 101-cysteine 117. N-linked (GlcNAc...) asparagine glycosylation is present at asparagine 122. 3 disulfide bridges follow: cysteine 123–cysteine 134, cysteine 129–cysteine 147, and cysteine 141–cysteine 156. Asparagine 159 is a glycosylation site (N-linked (GlcNAc...) asparagine). Positions 166–205 constitute an LDL-receptor class A 4 domain; it reads SCKTENYQYMCANHRCISLKVVCDKKDDCGDGSDEGPGCT. 3 disulfides stabilise this stretch: cysteine 167–cysteine 181, cysteine 176–cysteine 194, and cysteine 188–cysteine 204. 2 N-linked (GlcNAc...) asparagine glycosylation sites follow: asparagine 208 and asparagine 239. Positions 208–243 constitute an EGF-like 1 domain; the sequence is NCSSAGCQSNCHQTPKGSVCTCKPGYKLQKDNRTCN. Residues 244–283 enclose the EGF-like; calcium-binding domain; sequence DIDECQAYGICDQDCMNVPGSYACTCQREYYLENDKRTCK. Disulfide bonds link cysteine 248–cysteine 258, cysteine 254–cysteine 267, and cysteine 269–cysteine 282. LDL-receptor class B repeat units lie at residues 327-374, 375-416, 417-460, 461-501, and 502-544; these read DYVY…DWIT, KNIY…LPTQ, GKMY…DYPN, ERLY…TVFQ, and NKLY…DHSA. Residues 552–588 enclose the EGF-like 2 domain; it reads PCYSNPCSQLCMLNQNKGYTCGCTLDKKLNADKHTCQ. N-linked (GlcNAc...) asparagine glycosylation is found at asparagine 702, asparagine 859, asparagine 896, and asparagine 923. The EGF-like 3 domain occupies 889-927; sequence DCQKNNGNCSHVCLPSLITSFICACPPGMELSNDNRTCI. LDL-receptor class A domains are found at residues 931–969, 973–1009, 1012–1049, 1052–1090, and 1094–1131; these read ECSKNEYKCSEHNICIQRNQLCDGIENCPNGEDETSECR, RCKENQFMCKNGDCIRLKDRCNSRYDCTDQSDEQNCE, KCKSDEFQCKFTETCIPKTKMCDSNPDCDDLSDEEDCR, ECTSNEFKCNNGKCIPNTFVCDNDNDCEDGEDEAAEKCY, and ACKMPKMFKCPNGDCISDSLLCNGINDCNDGSDEVHCL. Disulfide bonds link cysteine 932–cysteine 945, cysteine 939–cysteine 958, cysteine 952–cysteine 968, cysteine 974–cysteine 986, cysteine 981–cysteine 999, cysteine 993–cysteine 1008, cysteine 1013–cysteine 1026, cysteine 1020–cysteine 1039, cysteine 1033–cysteine 1048, cysteine 1053–cysteine 1065, cysteine 1060–cysteine 1078, cysteine 1072–cysteine 1089, cysteine 1095–cysteine 1108, cysteine 1103–cysteine 1121, and cysteine 1115–cysteine 1130. N-linked (GlcNAc...) asparagine glycosylation is found at asparagine 1133 and asparagine 1140. LDL-receptor class A domains lie at 1140–1177, 1178–1214, and 1225–1260; these read NCSLNEYRCLGTDICLPKNVRCDGKNDCPQSDDEQNCT, YCFENEFACDNKRCIPELWVCDKANDCGDNSDEKNCD, and ECDEFKCSVGTCLPYSKVCDGNRDCPDGSDETGKCQ. 9 cysteine pairs are disulfide-bonded: cysteine 1141-cysteine 1154, cysteine 1148-cysteine 1167, cysteine 1161-cysteine 1176, cysteine 1179-cysteine 1191, cysteine 1186-cysteine 1204, cysteine 1198-cysteine 1213, cysteine 1226-cysteine 1236, cysteine 1231-cysteine 1249, and cysteine 1243-cysteine 1259. The N-linked (GlcNAc...) asparagine glycan is linked to asparagine 1175. In terms of domain architecture, EGF-like 4 spans 1262 to 1298; the sequence is ACTVNNFCKGMCYKTPAGAVCGCQSGYRLAVDMISCE. LDL-receptor class B repeat units follow at residues 1385 to 1425, 1471 to 1518, and 1519 to 1561; these read DSVY…DWIT, RWLF…DHVK, and SKLY…FEQS. N-linked (GlcNAc...) asparagine glycans are attached at residues asparagine 1626, asparagine 1640, and asparagine 1656. Residues 1664–1684 traverse the membrane as a helical segment; sequence ISGIYSITIIVLLVSVLLLCV. Residues 1685 to 1782 lie on the Cytoplasmic side of the membrane; sequence YYYYQKNKLK…ALIYFVHNSK (98 aa).

Expressed in ovaries of reproductive females.

The protein resides in the membrane. Its function is as follows. Involved in uptake of vitellogenin by endocytosis. Expression is regulated by the juvenile hormone analog, methoprene (in vitro). This Solenopsis invicta (Red imported fire ant) protein is Vitellogenin receptor.